A 314-amino-acid chain; its full sequence is tRNA dimethylallyltransferase (314 aa).

11–18 lines the ATP pocket; that stretch reads GPTGSGKT. 13–18 lines the substrate pocket; that stretch reads TGSGKT. Residues 36-39 are interaction with substrate tRNA; it reads DSMQ.

Belongs to the IPP transferase family. As to quaternary structure, monomer. Mg(2+) is required as a cofactor.

It catalyses the reaction adenosine(37) in tRNA + dimethylallyl diphosphate = N(6)-dimethylallyladenosine(37) in tRNA + diphosphate. Functionally, catalyzes the transfer of a dimethylallyl group onto the adenine at position 37 in tRNAs that read codons beginning with uridine, leading to the formation of N6-(dimethylallyl)adenosine (i(6)A). The protein is tRNA dimethylallyltransferase of Chlamydia muridarum (strain MoPn / Nigg).